We begin with the raw amino-acid sequence, 585 residues long: Cytochrome c lysine N-methyltransferase 1 (585 aa).

One can recognise an SET domain in the interval 18 to 273 (KSLSLKPSTI…KPIEVFISYS (256 aa)). Residues 186-288 (LNLSDIKHLY…FSMLVTYGFT (103 aa)) are SET-like.

Belongs to the class V-like SAM-binding methyltransferase superfamily.

The protein localises to the cytoplasm. The protein resides in the cytosol. It catalyses the reaction L-lysyl-[cytochrome c] + S-adenosyl-L-methionine = N(6)-methyl-L-lysyl-[cytochrome c] + S-adenosyl-L-homocysteine + H(+). Methyltransferase which mediates trimethylation of 'Lys-78' of cytochrome c (CYC1). This Saccharomyces cerevisiae (strain ATCC 204508 / S288c) (Baker's yeast) protein is Cytochrome c lysine N-methyltransferase 1 (CTM1).